Here is a 199-residue protein sequence, read N- to C-terminus: uncharacterized protein (199 aa).

Transmembrane regions (helical) follow at residues 35–55 (CELA…IFYD), 57–77 (FVIF…YLEF), 94–114 (LSAA…IFFG), and 131–151 (YYGC…ASFA).

It localises to the membrane. This is an uncharacterized protein from Caenorhabditis elegans.